The chain runs to 717 residues: Pentatricopeptide repeat-containing protein At1g53600, mitochondrial (717 aa).

The N-terminal 47 residues, 1-47, are a transit peptide targeting the mitochondrion; that stretch reads MVMRPISNKGLIYRHNICLRCNSTLAVSNHEPITQKTRNFLETTTTS. PPR repeat units follow at residues 49–79, 80–110, 111–142, 143–173, 176–206, 207–241, 242–272, 274–308, 309–339, 340–374, 375–401, 402–436, 437–471, 472–502, 503–537, 538–568, and 574–604; these read AIFQ…MSNR, SIVS…MPVR, VTTS…IPEK, NAVS…TPVK, DSVA…MAVK, EVVS…NVIT, WTAM…GDVK, NSNT…PLEF, DLFL…MKNK, DSVS…DMVS, WTDM…MPEK, DNIT…EVCP, NSYT…NIVN, DLSV…ISEP, NIVS…GKEP, NGVT…MKSS, and GPDH…MPCK. A type E motif region spans residues 609-684; it reads VWGSLLSASK…DPGSSWIILK (76 aa). Residues 685–715 are type E(+) motif; the sequence is GEVHNFLAGDESQLNLEEIGFTLKMIRKEME.

This sequence belongs to the PPR family. PCMP-E subfamily.

Its subcellular location is the mitochondrion. This is Pentatricopeptide repeat-containing protein At1g53600, mitochondrial (PCMP-E63) from Arabidopsis thaliana (Mouse-ear cress).